A 408-amino-acid polypeptide reads, in one-letter code: Menaquinone reductase (408 aa).

FAD contacts are provided by residues 13–17 (GAGPA), 46–49 (CGDG), R103, A127, D290, and 302–303 (GI).

The protein belongs to the geranylgeranyl reductase family. It depends on FAD as a cofactor.

The enzyme catalyses menaquinone-9 + AH2 = beta-dihydromenaquinone-9 + A. Its pathway is quinol/quinone metabolism; menaquinone biosynthesis. Catalyzes the reduction of a single double bond in the isoprenoid tail of menaquinone (MK-9) in M.tuberculosis, likely the beta-isoprene unit, forming the predominant form of menaquinone found in mycobacteria, MK-9(II-H2). In Mycobacterium tuberculosis (strain CDC 1551 / Oshkosh), this protein is Menaquinone reductase.